The primary structure comprises 65 residues: Alpha-toxin Lqq4 (65 aa).

Positions 3-65 (RDAYIADDKN…VPIRIPGKCR (63 aa)) constitute an LCN-type CS-alpha/beta domain. A specificity module, loop 1 region spans residues 9-13 (DDKNC). 4 disulfides stabilise this stretch: Cys-13–Cys-64, Cys-17–Cys-37, Cys-23–Cys-47, and Cys-27–Cys-49. Specificity module, loop regions lie at residues 40–44 (LGKYG) and 57–65 (PIRIPGKCR). Arg-65 carries the arginine amide modification.

Belongs to the long (4 C-C) scorpion toxin superfamily. Sodium channel inhibitor family. Alpha subfamily. Post-translationally, the recombinant toxin which is used for activity tests is not amidated. However, C-terminal amidation does not appear to play an important role in activity, since the non-amidated recombinant toxin and the native toxin (which is amidated) show similar activities on all sodium channels tested. As to expression, expressed by the venom gland.

The protein resides in the secreted. Its function is as follows. Alpha toxins bind voltage-independently at site-3 of sodium channels (Nav) and inhibit the inactivation of the activated channels, thereby blocking neuronal transmission. Both native and recombinant (non-amidated) toxins inhibit inactivation of Nav1.2/SCN2A (EC(50)=31.2-36.6 nM), Nav1.6/SCN8A (EC(50)=6.9-8.9 nM), and Nav1.7/SCN9A (EC(50)=182.0-260.1 nM). The polypeptide is Alpha-toxin Lqq4 (Leiurus quinquestriatus quinquestriatus (Egyptian scorpion)).